We begin with the raw amino-acid sequence, 310 residues long: Probable deoxyhypusine synthase (310 aa).

Lys280 serves as the catalytic Nucleophile.

It belongs to the deoxyhypusine synthase family. Requires NAD(+) as cofactor.

The enzyme catalyses [eIF5A protein]-L-lysine + spermidine = [eIF5A protein]-deoxyhypusine + propane-1,3-diamine. The protein operates within protein modification; eIF5A hypusination. Its function is as follows. Catalyzes the NAD-dependent oxidative cleavage of spermidine and the subsequent transfer of the butylamine moiety of spermidine to the epsilon-amino group of a specific lysine residue of the eIF-5A precursor protein to form the intermediate deoxyhypusine residue. The chain is Probable deoxyhypusine synthase (dys) from Aeropyrum pernix (strain ATCC 700893 / DSM 11879 / JCM 9820 / NBRC 100138 / K1).